The sequence spans 342 residues: Succinylglutamate desuccinylase (342 aa).

Zn(2+) is bound by residues H63, E66, and H155. E219 is an active-site residue.

This sequence belongs to the AspA/AstE family. Succinylglutamate desuccinylase subfamily. It depends on Zn(2+) as a cofactor.

The enzyme catalyses N-succinyl-L-glutamate + H2O = L-glutamate + succinate. Its pathway is amino-acid degradation; L-arginine degradation via AST pathway; L-glutamate and succinate from L-arginine: step 5/5. Its function is as follows. Transforms N(2)-succinylglutamate into succinate and glutamate. In Vibrio vulnificus (strain CMCP6), this protein is Succinylglutamate desuccinylase.